Consider the following 229-residue polypeptide: DNA mismatch repair protein MutH (229 aa).

Belongs to the MutH family.

Its subcellular location is the cytoplasm. Its function is as follows. Sequence-specific endonuclease that cleaves unmethylated GATC sequences. It is involved in DNA mismatch repair. In Shigella flexneri serotype 5b (strain 8401), this protein is DNA mismatch repair protein MutH.